The primary structure comprises 279 residues: Pantothenate synthetase (279 aa).

Residue 26–33 participates in ATP binding; the sequence is MGNLHEGH. The Proton donor role is filled by H33. A (R)-pantoate-binding site is contributed by Q57. Q57 provides a ligand contact to beta-alanine. 144–147 contributes to the ATP binding site; sequence GKKD. A (R)-pantoate-binding site is contributed by Q150. Residues V173 and 181–184 each bind ATP; that span reads LSSR.

Belongs to the pantothenate synthetase family. In terms of assembly, homodimer.

The protein localises to the cytoplasm. It carries out the reaction (R)-pantoate + beta-alanine + ATP = (R)-pantothenate + AMP + diphosphate + H(+). The protein operates within cofactor biosynthesis; (R)-pantothenate biosynthesis; (R)-pantothenate from (R)-pantoate and beta-alanine: step 1/1. In terms of biological role, catalyzes the condensation of pantoate with beta-alanine in an ATP-dependent reaction via a pantoyl-adenylate intermediate. This chain is Pantothenate synthetase, found in Burkholderia ambifaria (strain ATCC BAA-244 / DSM 16087 / CCUG 44356 / LMG 19182 / AMMD) (Burkholderia cepacia (strain AMMD)).